Here is a 1293-residue protein sequence, read N- to C-terminus: MNFNNELSDLKNRFLFRTLRAQKCSDVARDRIDFFIWELKFLNCFLHLQSFAFASECGMLDISQKMIEICKRFNTPPPHNSFAYWKEVICKRLCAISIQPDASSDDGFACWKKVIWKTKQEFRAKYSFPKTLLADNKVYDDDDTNPKFVMEFIDAVVGNLNVLVKINDPSSLLFVPGPKEQIEQVLKELKLLRFFVCFVSNKCIEPQYQHTTFYTHALIEASHIAMVVWLNLPIYGNRNQDLASSEVSCLLSDFMEMKIKSIQPDISRNNIYIDVLRALKSTIPQAQDKHAAESGIVETPTHNLMVGLSDQMANLQEMLCLLRDNLIHLPILDLEFHLQDMDSVIVDAGLLIYSLYDIKGQKEDTTLEDINQALGFDLPRNIEPIKAMINLVMQKAFQCNLPRIHGLGYVDFLLKNLKDFQGRYSDSLDFLKNQLQVIQTEFESLQPFLKVVVEEPHNKLKTLNEDCATQIIRKAYEVEYVVDACINKEVPQWCIERWLLDIIEEITCIKAKIQEKNTVEDTMKTVIARTSSKLARTPRMNEEIVGFEDVIENLRKKLLNGTKGQDVISIHGMPGLGKTTLANSLYSDRSVFSQFDICAQCCVSQVYSYKDLILALLRDAIGEGSVRRELHANELADMLRKTLLPRRYLILVDDVWENSVWDDLRGCFPDVNNRSRIILTTRHHEVAKYASVHSDPLHLRMFDEVESWKLLEKKVFGEESCSPLLKNVGLRIAKMCGQLPLSIVLVAGILSEMEKEVECWEQVANNLGSYIHNDSRAIVDKSYHVLPCHLKSCFLYFGAFLEDRVIDISRLIRLWISEAFIKSSEGRRLEDIAEGYLENLIGRNLVMVTQRSISDGKAKECRLHDVLLDFCKERAAEENFLLWINRDQITKPSSCVYSHKQHAHLAFTEMHNLVEWSASCSFVGSVVLSNKYDSYFSTRDISSLHDFSISRILPNFKFLKVLDLEHRVFIDFIPTELVYLKYFSAHIEQNSIPSSISNLWNLETLILKSPIYALRCTLLLPSTVWDMVKLRHLYIPDFSTRIEAALLENSAKLYNLETLSTLYFSRVEDAELMLRKTPNLRKLICEVECLEYPPQYHVLNFPIRLEILKLYRSKFKTIPFCISAPNLKYLKLCGFSLDSQYLSETADHLKHLEVLILYKVEFGDHREWKVSNGKFPQLKILKLEYLSLVKWIVADDAFPNLEQLVLRGCQDLMEIPSCFMDILSLKYIGVEYCNESVVKSALNIQETQVEDYQNTNFKLVLIEFSLQKKAWKLNLTDAEDMHNAVKNILAEIR.

Coiled coils occupy residues 423–446 and 538–560; these read RYSD…ESLQ and PRMN…KLLN. The 288-residue stretch at 539–826 folds into the NB-ARC domain; sequence RMNEEIVGFE…SEAFIKSSEG (288 aa). 572–579 contacts ATP; it reads GMPGLGKT. 9 LRR repeats span residues 876 to 899, 956 to 981, 1027 to 1049, 1056 to 1079, 1102 to 1125, 1149 to 1172, 1175 to 1197, 1198 to 1222, and 1235 to 1259; these read AEEN…VYSH, FKFL…VYLK, MVKL…LLEN, LETL…KTPN, PIRL…ISAP, LKHL…KVSN, FPQL…ADDA, FPNL…FMDI, and ESVV…NFKL.

This sequence belongs to the disease resistance NB-LRR family.

Its subcellular location is the cytoplasm. It localises to the membrane. Its function is as follows. Confers resistance to late blight (Phytophthora infestans) races carrying the avirulence gene Avr1. Resistance proteins guard the plant against pathogens that contain an appropriate avirulence protein via an indirect interaction with this avirulence protein. That triggers a defense system including the hypersensitive response, which restricts the pathogen growth. In Solanum demissum (Wild potato), this protein is Late blight resistance protein R1-A (R1A).